A 954-amino-acid chain; its full sequence is E3 ubiquitin-protein ligase arkadia (954 aa).

The segment covering 50 to 66 has biased composition (polar residues); that stretch reads LCSDTNKQQRDLNSNGT. Disordered regions lie at residues 50–175 and 193–276; these read LCSD…VSSL and RKRF…SGGM. 2 stretches are compositionally biased toward low complexity: residues 112–131 and 232–251; these read SSFS…GDSD and SSSS…SSST. The SUMO interaction motif 1 (SIM) motif lies at 280–284; it reads VVVIE. Positions 305–311 match the SUMO interaction motif 2 (SIM) motif; that stretch reads EVEIVTV. 3 disordered regions span residues 318-346, 364-452, and 485-509; these read RTTL…RNRV, TVDE…MPRL, and HFPH…SFRD. The span at 328–337 shows a compositional bias: polar residues; that stretch reads WGQNTQSGRT. The SUMO interaction motif 3 (SIM) motif lies at 360–364; that stretch reads VVDLT. A compositionally biased stretch (low complexity) spans 385-395; sequence VSTVSSNTSTS. Positions 485–496 are enriched in basic residues; it reads HFPHHHHHHHQS. Residues 867–869 are ubiquitin binding; it reads YPH. Positions 902 and 905 each coordinate Zn(2+). The RING-type; atypical zinc finger occupies 902-943; that stretch reads CTICLSILEEGEDVRRLPCMHLFHQVCVDQWLITNKKCPICR. The interval 917–921 is ubiquitin binding; sequence RLPCM. Zn(2+) contacts are provided by histidine 925 and cysteine 928.

This sequence belongs to the Arkadia family. Monomer.

The protein resides in the nucleus. The protein localises to the cytoplasm. It localises to the PML body. The enzyme catalyses S-ubiquitinyl-[E2 ubiquitin-conjugating enzyme]-L-cysteine + [acceptor protein]-L-lysine = [E2 ubiquitin-conjugating enzyme]-L-cysteine + N(6)-ubiquitinyl-[acceptor protein]-L-lysine.. Its pathway is protein modification; protein ubiquitination. Its activity is regulated as follows. Binds free ubiquitin non-covalently via its RING-type zinc finger. Ubiquitin-binding leads to enhance the E3 ubiquitin-protein ligase activity by stabilizing the ubiquitin-conjugating enzyme E2 (donor ubiquitin) in the 'closed' conformation and activating ubiquitin transfer. E3 ubiquitin-protein ligase required for mesoderm patterning during embryonic development. Acts as an enhancer of the transcriptional responses of the smad2/smad3 effectors, which are activated downstream of BMP. Acts by mediating ubiquitination and degradation of SMAD inhibitors such as smad7, inducing their proteasomal degradation and thereby enhancing the transcriptional activity of TGF-beta and BMP. Specifically binds polysumoylated chains via SUMO interaction motifs (SIMs) and mediates ubiquitination of sumoylated substrates. The regulation of the BMP-SMAD signaling is however independent of sumoylation and is not dependent of SUMO interaction motifs (SIMs). This chain is E3 ubiquitin-protein ligase arkadia (rnf111), found in Xenopus tropicalis (Western clawed frog).